The following is a 378-amino-acid chain: Poly(3-hydroxyalkanoate) polymerase subunit PhaC (378 aa).

The region spanning 84–356 (PVLIVYALVN…QSFPVGHIGM (273 aa)) is the AB hydrolase-1 domain.

This sequence belongs to the PHA/PHB synthase family. Type III PhaC subfamily. In terms of assembly, forms a heterodimer with PhaE, which may multimerize in the presence of 3-hydroxybutyryl-CoA. Both subunits are required for PHB synthesis in E.coli and in PHA-negative A.eutrophus.

The protein resides in the cytoplasm. It catalyses the reaction (3R)-3-hydroxybutanoyl-CoA + [(3R)-hydroxybutanoate](n) = [(3R)-hydroxybutanoate](n+1) + CoA. It functions in the pathway biopolymer metabolism; poly-(R)-3-hydroxybutanoate biosynthesis. When expressed in E.coli with Synechocystis PhaE and C.necator PhaA and PhaB, confers the ability to synthesize up to 13% (w/w) poly(3-hydroxybutyrate) (PHB) depending on the carbon source; all 4 genes are necessary for PHB production. Cell-free in vitro coexpression with PhaE gives a heterodimer able to polymerize 3-hydroxybutyrate-CoA. This Synechocystis sp. (strain ATCC 27184 / PCC 6803 / Kazusa) protein is Poly(3-hydroxyalkanoate) polymerase subunit PhaC.